We begin with the raw amino-acid sequence, 429 residues long: High mobility group nucleosome-binding domain-containing protein 5 (429 aa).

The disordered stretch occupies residues 1–429 (MPKRKAAGDA…GEKGEPVSTV (429 aa)). Position 29 is a phosphothreonine (Thr29). Residues 35–44 (KRASTSRKTK) are compositionally biased toward basic residues. Residue Lys64 forms a Glycyl lysine isopeptide (Lys-Gly) (interchain with G-Cter in SUMO2) linkage. Ser90 carries the phosphoserine modification. Basic and acidic residues-rich tracts occupy residues 92 to 101 (METEEVKEQI) and 109 to 124 (GGEKKEAVVTKGKNDE). Lys98 is covalently cross-linked (Glycyl lysine isopeptide (Lys-Gly) (interchain with G-Cter in SUMO1); alternate). Lys98 participates in a covalent cross-link: Glycyl lysine isopeptide (Lys-Gly) (interchain with G-Cter in SUMO2); alternate. Lys121 participates in a covalent cross-link: Glycyl lysine isopeptide (Lys-Gly) (interchain with G-Cter in SUMO2). The span at 133–152 (EKDEDEKEHEDTGEEGEDGE) shows a compositional bias: acidic residues. The span at 153-195 (REGGLKEKPDVAEIEDAKEAKDDEEKEDKEKEDDKGGDGKKEE) shows a compositional bias: basic and acidic residues. A compositionally biased stretch (acidic residues) spans 196–209 (EKDDEGEAETEEEV). Basic and acidic residues-rich tracts occupy residues 210–387 (KEQQ…NEDR) and 413–429 (NKDFKEDGEKGEPVSTV).

This sequence belongs to the HMGN family. As to expression, expressed in trophoblast giant cells.

The protein resides in the nucleus. Its function is as follows. Preferentially binds to euchromatin and modulates cellular transcription by counteracting linker histone-mediated chromatin compaction. The sequence is that of High mobility group nucleosome-binding domain-containing protein 5 from Rattus norvegicus (Rat).